The chain runs to 183 residues: MGIDINHKHDRKVRRTEVKSQDVYLRLLVKLYRYLARRTNAKFNQIVLRRLFMSRINRPPLSLSRLARHMKKPTREGLIAVVVGTITNDTRLYKVPKMTVAALHVTEKARARILDAGGEILTFDQLALRAPTGRKTVLIQGQRNAREAVRHFGPAPGAPRSHTKPYVRSKGHEQAKPSRRSNV.

The segment at histidine 151 to valine 183 is disordered.

The protein belongs to the eukaryotic ribosomal protein eL18 family.

The protein localises to the cytoplasm. This chain is Large ribosomal subunit protein eL18 (RpL18), found in Plutella xylostella (Diamondback moth).